Reading from the N-terminus, the 252-residue chain is Endonuclease NucS (252 aa).

The protein belongs to the NucS endonuclease family.

Its subcellular location is the cytoplasm. In terms of biological role, cleaves both 3' and 5' ssDNA extremities of branched DNA structures. This Thermococcus kodakarensis (strain ATCC BAA-918 / JCM 12380 / KOD1) (Pyrococcus kodakaraensis (strain KOD1)) protein is Endonuclease NucS.